Reading from the N-terminus, the 927-residue chain is Probable dipeptidyl-aminopeptidase B (927 aa).

Disordered stretches follow at residues 1-44 (MAPA…TTSI) and 58-101 (GHFE…KNDG). Residues 1-108 (MAPAPGMAPY…NDGMNRGMRR (108 aa)) are Cytoplasmic-facing. Basic and acidic residues-rich tracts occupy residues 19-36 (HRPE…HESE) and 58-70 (GHFE…PMKE). Residues 109–129 (TLIIVAGLLISAWVVGLFFYV) form a helical; Signal-anchor for type II membrane protein membrane-spanning segment. Over 130–927 (SHKSYKPASQ…RSIQPILPIL (798 aa)) the chain is Vacuolar. 2 N-linked (GlcNAc...) asparagine glycosylation sites follow: Asn-365 and Asn-530. Ser-769 functions as the Charge relay system in the catalytic mechanism. Residue Asn-828 is glycosylated (N-linked (GlcNAc...) asparagine). Active-site charge relay system residues include Asp-846 and His-879.

This sequence belongs to the peptidase S9B family.

It localises to the vacuole membrane. It carries out the reaction Release of an N-terminal dipeptide, Xaa-Yaa-|-Zaa-, from a polypeptide, preferentially when Yaa is Pro, provided Zaa is neither Pro nor hydroxyproline.. In terms of biological role, type IV dipeptidyl-peptidase which removes N-terminal dipeptides sequentially from polypeptides having unsubstituted N-termini provided that the penultimate residue is proline. The sequence is that of Probable dipeptidyl-aminopeptidase B (DAPB) from Podospora anserina (strain S / ATCC MYA-4624 / DSM 980 / FGSC 10383) (Pleurage anserina).